The primary structure comprises 340 residues: MLDPRARTLLKTLIERYIADGQPVGSRTLSRYSGLELSPATIRNVMSDLEELGLVSSPHTSAGRVPTPRGYRLFVDTMLTVEAPIDAEAVARQVQNTLQAGEPQQRVVAAAASVLSNLSQFAGVVLTPRRSHVFKQIEFMRLSDKRILLIIVTPEGDVQNRMLATPRDYSPSQLTEASNYINAHFAGLSFDEVRRRLRDEIDQLRGDMTTLMHAAVTASTEVPDTEDTVLISGERNLLEVADLSSDMARLRKLFDVFDQKTGLLQLLDVSSHAQGVQIFIGGESTLVPIEEMSVVTAPYEVNGQIVGTLGVIGPTRMAYNRVIPIVDITARLLSLTLSQQ.

Belongs to the HrcA family.

Negative regulator of class I heat shock genes (grpE-dnaK-dnaJ and groELS operons). Prevents heat-shock induction of these operons. The chain is Heat-inducible transcription repressor HrcA from Burkholderia cenocepacia (strain HI2424).